We begin with the raw amino-acid sequence, 510 residues long: Maturase K (510 aa).

This sequence belongs to the intron maturase 2 family. MatK subfamily.

Its subcellular location is the plastid. Functionally, usually encoded in the trnK tRNA gene intron. Probably assists in splicing its own and other chloroplast group II introns. The chain is Maturase K from Bartsia alpina (Velvet bells).